A 397-amino-acid polypeptide reads, in one-letter code: Tryptophan synthase beta chain (397 aa).

K87 bears the N6-(pyridoxal phosphate)lysine mark.

This sequence belongs to the TrpB family. In terms of assembly, tetramer of two alpha and two beta chains. Pyridoxal 5'-phosphate is required as a cofactor.

It catalyses the reaction (1S,2R)-1-C-(indol-3-yl)glycerol 3-phosphate + L-serine = D-glyceraldehyde 3-phosphate + L-tryptophan + H2O. The protein operates within amino-acid biosynthesis; L-tryptophan biosynthesis; L-tryptophan from chorismate: step 5/5. Functionally, the beta subunit is responsible for the synthesis of L-tryptophan from indole and L-serine. The sequence is that of Tryptophan synthase beta chain from Klebsiella pneumoniae (strain 342).